A 252-amino-acid polypeptide reads, in one-letter code: Phosphate import ATP-binding protein PstB (252 aa).

The ABC transporter domain maps to 5 to 247 (LIASDVNIFY…PRDERTEAYV (243 aa)). 37–44 (GPSGCGKT) lines the ATP pocket.

This sequence belongs to the ABC transporter superfamily. Phosphate importer (TC 3.A.1.7) family. In terms of assembly, the complex is composed of two ATP-binding proteins (PstB), two transmembrane proteins (PstC and PstA) and a solute-binding protein (PstS).

It localises to the cell membrane. It catalyses the reaction phosphate(out) + ATP + H2O = ADP + 2 phosphate(in) + H(+). Part of the ABC transporter complex PstSACB involved in phosphate import. Responsible for energy coupling to the transport system. The sequence is that of Phosphate import ATP-binding protein PstB from Deinococcus geothermalis (strain DSM 11300 / CIP 105573 / AG-3a).